Here is a 306-residue protein sequence, read N- to C-terminus: Ribonuclease Z (306 aa).

H63, H65, D67, H68, H141, D208, and H266 together coordinate Zn(2+). The Proton acceptor role is filled by D67.

Belongs to the RNase Z family. As to quaternary structure, homodimer. Requires Zn(2+) as cofactor.

The catalysed reaction is Endonucleolytic cleavage of RNA, removing extra 3' nucleotides from tRNA precursor, generating 3' termini of tRNAs. A 3'-hydroxy group is left at the tRNA terminus and a 5'-phosphoryl group is left at the trailer molecule.. Functionally, zinc phosphodiesterase, which displays some tRNA 3'-processing endonuclease activity. Probably involved in tRNA maturation, by removing a 3'-trailer from precursor tRNA. The sequence is that of Ribonuclease Z from Chlamydia caviae (strain ATCC VR-813 / DSM 19441 / 03DC25 / GPIC) (Chlamydophila caviae).